A 2214-amino-acid chain; its full sequence is Non-reducing polyketide synthase dpmpA (2214 aa).

The interval 75-178 is N-terminal acylcarrier protein transacylase domain (SAT); that stretch reads EWIRTGDSHV…LAVCAGAWKD (104 aa). One can recognise a Ketosynthase family 3 (KS3) domain in the interval 372–784; that stretch reads DESIAIVGAS…GNNTAMIVCQ (413 aa). Active-site for beta-ketoacyl synthase activity residues include Cys-532, His-667, and His-707. A malonyl-CoA:ACP transacylase (MAT) domain region spans residues 888–1184; it reads VFAGQTGHRP…AFLSARLGSP (297 aa). Ser-974 functions as the For acyl/malonyl transferase activity in the catalytic mechanism. Residues 1255–1389 are N-terminal hotdog fold; it reads PQLVSVVRSS…GIIKSQEQDR (135 aa). One can recognise a PKS/mFAS DH domain in the interval 1255–1566; the sequence is PQLVSVVRSS…FSKVPVRSLQ (312 aa). The tract at residues 1265–1560 is product template (PT) domain; the sequence is GGADPEAAEF…AILGARFSKV (296 aa). The C-terminal hotdog fold stretch occupies residues 1416-1566; sequence GASVVQGAFV…FSKVPVRSLQ (151 aa). 2 consecutive Carrier domains span residues 1620–1695 and 1722–1802; these read NEVK…HSRL and KAST…SGAD. Position 1654 is an O-(pantetheine 4'-phosphoryl)serine (Ser-1654). Residues 1698-1728 form a disordered region; sequence VPQLSPHDTDRSSDLSAGQPPSTPKASTQEQ. Residues 1711–1726 show a composition bias toward polar residues; sequence DLSAGQPPSTPKASTQ. Ser-1762 carries the O-(pantetheine 4'-phosphoryl)serine modification. Residues 1805 to 1827 are disordered; that stretch reads GFPRTSDNRRSEEGSVGHVGPEK. Positions 1810–1827 are enriched in basic and acidic residues; that stretch reads SDNRRSEEGSVGHVGPEK. Residues 1958-2210 form a methyltransferase (CMeT) domain region; it reads FPAYRPDHRL…SREADLFRWI (253 aa).

It participates in secondary metabolite biosynthesis; terpenoid biosynthesis. Functionally, non-reducing polyketide synthase; part of the gene cluster that mediates the biosynthesis of diterpenoid pyrones. The first step of the pathway is the synthesis of the alpha-pyrone moiety by the polyketide synthase dpmpA via condensation of one acetyl-CoA starter unit with 3 malonyl-CoA units and 2 methylations. The alpha-pyrone is then combined with geranylgeranyl pyrophosphate (GGPP) formed by the GGPP synthase dpmpD through the action of the prenyltransferase dpmpC to yield a linear alpha-pyrone diterpenoid. Subsequent steps in the diterpenoid pyrone biosynthetic pathway involve the decalin core formation, which is initiated by the epoxidation of the C10-C11 olefin by the FAD-dependent oxidoreductase dpmpE, and is followed by a cyclization cascade catalyzed by the terpene cyclase dpmpB. The short chain dehydrogenase/reductase dpmpG then oxidizes the 8S hydroxy group to a ketone and the short chain dehydrogenase/reductase dpmpH reduces the ketone to the 8R hydroxy group to yield higginsianin B. Higginsianin B is further methylated by the methyltransferase dpmpI to produce the intermediate named FDDP B. The cytochrome P450 monooxygenase dpmpJ then oxidizes the C-26 methyl to primary alcohol, producing the final diterpenoid pyrone with a C-26 primary alcohol on the gamma-pyrone moiety named FDDP C. This Macrophomina phaseolina (strain MS6) (Charcoal rot fungus) protein is Non-reducing polyketide synthase dpmpA.